We begin with the raw amino-acid sequence, 254 residues long: MFPFERQNKIIHLLDQNNKITVPELSRILDVSISTIRNDLSALEESGMIKKVHGGAVLLKSEEKFTNFNDRIIRNIEEKEAIAKEAATLVKNNQTIILDASSTALALAKELHGFSRLTVITSGLYTAIELKDNPNISVILTGGIVTTNSFTLEGILGANLIENIHADLCFMSAKGFTMEEGLTDFNIYETELKRLLAKRTNKLVALLDHTKMGVISTASITTAENIDLLITDNKINKALYKKFQDAGLPVKIAE.

One can recognise an HTH deoR-type domain in the interval 3-58 (PFERQNKIIHLLDQNNKITVPELSRILDVSISTIRNDLSALEESGMIKKVHGGAVL). Positions 20 to 39 (ITVPELSRILDVSISTIRND) form a DNA-binding region, H-T-H motif.

In terms of biological role, involved in the glycerol metabolism. Repressor of the gol operon for glycerol metabolism. The sequence is that of HTH-type transcriptional regulator GolR from Listeria innocua serovar 6a (strain ATCC BAA-680 / CLIP 11262).